The following is a 97-amino-acid chain: Small ribosomal subunit protein bS20 (97 aa).

It belongs to the bacterial ribosomal protein bS20 family.

Its function is as follows. Binds directly to 16S ribosomal RNA. The protein is Small ribosomal subunit protein bS20 of Prochlorococcus marinus (strain MIT 9215).